A 212-amino-acid polypeptide reads, in one-letter code: Pyridoxine/pyridoxamine 5'-phosphate oxidase (212 aa).

Residues 8–11 (RREY) and lysine 66 contribute to the substrate site. Residues 61 to 66 (RIVLLK), 76 to 77 (FT), arginine 82, lysine 83, and glutamine 105 contribute to the FMN site. Tyrosine 123, arginine 127, and serine 131 together coordinate substrate. Residues 140-141 (QS) and tryptophan 185 each bind FMN. 191–193 (RLH) is a binding site for substrate. An FMN-binding site is contributed by arginine 195.

Belongs to the pyridoxamine 5'-phosphate oxidase family. As to quaternary structure, homodimer. Requires FMN as cofactor.

It catalyses the reaction pyridoxamine 5'-phosphate + O2 + H2O = pyridoxal 5'-phosphate + H2O2 + NH4(+). The catalysed reaction is pyridoxine 5'-phosphate + O2 = pyridoxal 5'-phosphate + H2O2. Its pathway is cofactor metabolism; pyridoxal 5'-phosphate salvage; pyridoxal 5'-phosphate from pyridoxamine 5'-phosphate: step 1/1. It participates in cofactor metabolism; pyridoxal 5'-phosphate salvage; pyridoxal 5'-phosphate from pyridoxine 5'-phosphate: step 1/1. In terms of biological role, catalyzes the oxidation of either pyridoxine 5'-phosphate (PNP) or pyridoxamine 5'-phosphate (PMP) into pyridoxal 5'-phosphate (PLP). This chain is Pyridoxine/pyridoxamine 5'-phosphate oxidase, found in Shewanella oneidensis (strain ATCC 700550 / JCM 31522 / CIP 106686 / LMG 19005 / NCIMB 14063 / MR-1).